A 188-amino-acid polypeptide reads, in one-letter code: MLSEFFNSLASFFSNIFSLFEGKKDTRILMIGLDGAGKSTLLFKLKLGDVVLTIPTIGFNVETIVYKNLSMTVWDVGGQHKIRALWKHYYHGTNAIIFVVDSTDRERMDEVKEEIDNLLIQDELKGIQILVLANKQDMNNAMNTAEIVNSLNLNSIKDRKWYVQPCSAIRSDGIYEGFDWVANSLNNK.

GTP is bound by residues 34–40 (DGAGKST), 75–79 (DVGGQ), and 134–137 (NKQD).

The protein belongs to the small GTPase superfamily. Arf family.

It is found in the golgi apparatus. Its function is as follows. GTP-binding protein that may be involved in protein trafficking. May modulate vesicle budding and uncoating within the Golgi apparatus. The polypeptide is ADP-ribosylation factor K (arrK) (Dictyostelium discoideum (Social amoeba)).